A 443-amino-acid polypeptide reads, in one-letter code: NADH-ubiquinone oxidoreductase chain 4 (443 aa).

15 consecutive transmembrane segments (helical) span residues 1–21 (MFIS…PEAH), 27–47 (VWSF…WWNF), 71–91 (GVAL…MMLL), 93–113 (TVAG…ALCV), 114–134 (LDLL…FLLI), 148–168 (IVLY…MIYS), 187–207 (VLGW…PVHL), 217–237 (PTAG…IGFL), 247–267 (FCVS…LFST), 279–299 (IVAY…FSQS), 308–328 (FLMI…GILY), 335–355 (FILY…LFFL), 362–382 (AFPL…IFAV), 385–405 (LLAY…FWAF), and 423–443 (EFHT…KPMA).

This sequence belongs to the complex I subunit 4 family.

It localises to the mitochondrion membrane. The enzyme catalyses a ubiquinone + NADH + 5 H(+)(in) = a ubiquinol + NAD(+) + 4 H(+)(out). Core subunit of the mitochondrial membrane respiratory chain NADH dehydrogenase (Complex I) that is believed to belong to the minimal assembly required for catalysis. Complex I functions in the transfer of electrons from NADH to the respiratory chain. The immediate electron acceptor for the enzyme is believed to be ubiquinone. This Chlamydomonas reinhardtii (Chlamydomonas smithii) protein is NADH-ubiquinone oxidoreductase chain 4 (ND4).